The following is a 129-amino-acid chain: Large ribosomal subunit protein bL12c (129 aa).

It belongs to the bacterial ribosomal protein bL12 family. Homodimer. Part of the ribosomal stalk of the 50S ribosomal subunit. Forms a multimeric L10(L12)X complex, where L10 forms an elongated spine to which 2 to 4 L12 dimers bind in a sequential fashion. Binds GTP-bound translation factors.

Its subcellular location is the plastid. It is found in the chloroplast. Forms part of the ribosomal stalk which helps the ribosome interact with GTP-bound translation factors. Is thus essential for accurate translation. In Oltmannsiellopsis viridis (Marine flagellate), this protein is Large ribosomal subunit protein bL12c.